Here is a 209-residue protein sequence, read N- to C-terminus: Thymidine kinase (209 aa).

Residues 9–16 (AAMNAGKS) and 88–91 (DEAQ) each bind ATP. Glu89 (proton acceptor) is an active-site residue. Positions 146, 148, 183, and 186 each coordinate Zn(2+).

It belongs to the thymidine kinase family. In terms of assembly, homotetramer.

Its subcellular location is the cytoplasm. The enzyme catalyses thymidine + ATP = dTMP + ADP + H(+). This Legionella pneumophila (strain Lens) protein is Thymidine kinase.